Reading from the N-terminus, the 156-residue chain is Small ribosomal subunit protein bS16 (156 aa).

The interval 114–156 (ENEPVAEAITPKKKKAAKADEAKAEDTAADAEAPAADAEAADK) is disordered. Over residues 130-139 (AKADEAKAED) the composition is skewed to basic and acidic residues. The span at 143–156 (DAEAPAADAEAADK) shows a compositional bias: low complexity.

The protein belongs to the bacterial ribosomal protein bS16 family.

This is Small ribosomal subunit protein bS16 from Rhodococcus erythropolis (strain PR4 / NBRC 100887).